A 331-amino-acid chain; its full sequence is Nucleotide sugar transporter SLC35B4 (331 aa).

A run of 11 helical transmembrane segments spans residues 4 to 24 (ALAVGLVFAGCCSNVIFLELL), 30 to 50 (GCGNIVTFAQFLFIAVEGFLF), 59 to 79 (PAIPIRYYAIMVTMFFTVSVV), 92 to 112 (LHMIFRSGSLIANMILGIIIL), 117 to 137 (SIFKYTSIALVSVGIFICTFM), 153 to 173 (GFQAFVWWLLGIGALTFALLM), 201 to 221 (ALPLPGFIFLASDIYDHAVLF), 229 to 249 (IPGIGVTLPIMWFYLLMNIIT), 251 to 267 (YVCIRGVFILTTECASL), 268 to 288 (TVTLVVTLRKFVSLIFSILYF), and 291 to 311 (PFTLWHWLGTLFVFIGTLMYT). Residues 326–331 (KDNKKN) carry the Mediates endoplasmic reticulum retention motif.

It belongs to the nucleotide-sugar transporter family. SLC35B subfamily.

The protein resides in the endoplasmic reticulum membrane. It carries out the reaction UDP-N-acetyl-alpha-D-glucosamine(in) + UDP-alpha-D-glucuronate(out) = UDP-N-acetyl-alpha-D-glucosamine(out) + UDP-alpha-D-glucuronate(in). It catalyses the reaction UDP-alpha-D-xylose(in) + UDP-alpha-D-glucuronate(out) = UDP-alpha-D-xylose(out) + UDP-alpha-D-glucuronate(in). Functionally, antiporter that transports nucleotide sugars across the endoplasmic reticulum (ER) membrane in exchange for another nucleotide sugar. May couple UDP-alpha-D-glucuronate (UDP-GlcA) or UDP-alpha-D-xylose (UDP-Xyl) efflux to UDP-alpha-D-glucuronate (UDP-GlcA) influx into the ER lumen, which in turn stimulates glucuronidation and excretion of endobiotics and xenobiotics. The sequence is that of Nucleotide sugar transporter SLC35B4 (SLC35B4) from Macaca fascicularis (Crab-eating macaque).